Reading from the N-terminus, the 551-residue chain is Nicotianamine aminotransferase B (551 aa).

The interval 24 to 127 is disordered; it reads KSNGHGVAAA…GHAAAAAEEE (104 aa). Residues 86 to 96 are compositionally biased toward basic and acidic residues; sequence GHRESNGHAEA. The segment covering 111 to 123 has biased composition (low complexity); sequence AANGESNGHAAAA. K379 bears the N6-(pyridoxal phosphate)lysine mark.

This sequence belongs to the class-I pyridoxal-phosphate-dependent aminotransferase family. Pyridoxal 5'-phosphate serves as cofactor. As to expression, expressed in roots, but not in leaves.

It catalyses the reaction nicotianamine + 2-oxoglutarate = 3''-deamino-3''-oxonicotianamine + L-glutamate. Involved in biosynthesis of mugineic acid family phytosiderophores. In Hordeum vulgare (Barley), this protein is Nicotianamine aminotransferase B.